The sequence spans 66 residues: Large ribosomal subunit protein bL33B (66 aa).

The protein belongs to the bacterial ribosomal protein bL33 family.

The protein is Large ribosomal subunit protein bL33B of Synechococcus sp. (strain CC9605).